Here is a 166-residue protein sequence, read N- to C-terminus: Large ribosomal subunit protein mL49 (166 aa).

A disordered region spans residues 54–77 (PTKIPEPPKHKHYPTPSGWQPPRD).

This sequence belongs to the mitochondrion-specific ribosomal protein mL49 family. As to quaternary structure, component of the mitochondrial ribosome large subunit (39S) which comprises a 16S rRNA and about 50 distinct proteins. Interacts with OXA1L.

Its subcellular location is the mitochondrion. The polypeptide is Large ribosomal subunit protein mL49 (Mrpl49) (Mus musculus (Mouse)).